Here is a 205-residue protein sequence, read N- to C-terminus: Protein-L-isoaspartate O-methyltransferase (205 aa).

Ser-52 is an active-site residue.

The protein belongs to the methyltransferase superfamily. L-isoaspartyl/D-aspartyl protein methyltransferase family.

The protein localises to the cytoplasm. The catalysed reaction is [protein]-L-isoaspartate + S-adenosyl-L-methionine = [protein]-L-isoaspartate alpha-methyl ester + S-adenosyl-L-homocysteine. Its function is as follows. Catalyzes the methyl esterification of L-isoaspartyl residues in peptides and proteins that result from spontaneous decomposition of normal L-aspartyl and L-asparaginyl residues. It plays a role in the repair and/or degradation of damaged proteins. This Gloeobacter violaceus (strain ATCC 29082 / PCC 7421) protein is Protein-L-isoaspartate O-methyltransferase.